We begin with the raw amino-acid sequence, 378 residues long: Mannitol-1-phosphate 5-dehydrogenase (378 aa).

4–15 provides a ligand contact to NAD(+); the sequence is SVHFGAGNIGRG.

The protein belongs to the mannitol dehydrogenase family.

The catalysed reaction is D-mannitol 1-phosphate + NAD(+) = beta-D-fructose 6-phosphate + NADH + H(+). In Streptococcus pneumoniae (strain Hungary19A-6), this protein is Mannitol-1-phosphate 5-dehydrogenase.